Reading from the N-terminus, the 930-residue chain is Protocadherin gamma-B6 (930 aa).

The signal sequence occupies residues 1–30 (MGGSCAQRRRAGPRQVLFPLLLPLFYPTLS). 6 Cadherin domains span residues 31–133 (EPIR…APQF), 134–242 (DKKE…PPVF), 243–347 (SRDE…SPEI), 348–452 (IITS…APVF), 453–562 (DQTS…APRV), and 570–675 (DGSA…LPDL). The Extracellular portion of the chain corresponds to 31–691 (EPIRYSIPEE…SDPQAELQFY (661 aa)). N-linked (GlcNAc...) asparagine glycosylation is found at asparagine 304, asparagine 419, and asparagine 545. A helical transmembrane segment spans residues 692 to 712 (LVVALALISVLFLLAVILAIA). Over 713–930 (LRLRRSLSPA…KKKSGKKEKK (218 aa)) the chain is Cytoplasmic. Disordered regions lie at residues 791–839 (PHGG…WPNN) and 900–930 (ATLTNAAGKRDGKAPAGGNGNKKKSGKKEKK). Residues 800 to 839 (HPETLTSQAPPNTDWRFSQAQRPGTSGSQNGDDTGTWPNN) show a composition bias toward polar residues. Positions 920 to 930 (NKKKSGKKEKK) are enriched in basic residues.

The protein resides in the cell membrane. Its function is as follows. Potential calcium-dependent cell-adhesion protein. May be involved in the establishment and maintenance of specific neuronal connections in the brain. The sequence is that of Protocadherin gamma-B6 (PCDHGB6) from Homo sapiens (Human).